The chain runs to 1462 residues: Gag-Pol polyprotein (1462 aa).

Residue Gly2 is the site of N-myristoyl glycine; by host attachment. Residues 7–31 (VLRGKKADELEKIRLRPGGKKKYRL) form an interaction with Gp41 region. Positions 16 to 22 (LEKIRLR) match the Nuclear export signal motif. The short motif at 26 to 32 (KKKYRLK) is the Nuclear localization signal element. An interaction with human PPIA/CYPA and NUP153 region spans residues 191-228 (NCVGDHQAAMQIIREIINEEAADWDVQHPIPGPLPAGQ). Residues 279-364 (YNPTNILDIK…GGPGQKARLM (86 aa)) are dimerization/Multimerization of capsid protein p24. CCHC-type zinc fingers lie at residues 388–405 (IKCW…QCRA) and 409–426 (QGCW…NCPD). Residues 441 to 507 (APQLPRGPKF…RRDTTQRDDR (67 aa)) are disordered. Residues 454 to 468 (NTNSTPNGSSSGPTG) show a composition bias toward low complexity. Composition is skewed to basic and acidic residues over residues 471 to 490 (HAAR…RSDR) and 497 to 507 (ARRDTTQRDDR). A dimerization of protease region spans residues 512–516 (PQFSL). One can recognise a Peptidase A2 domain in the interval 531 to 600 (VEVLLDTGAD…TPINIFGRNI (70 aa)). Asp536 acts as the For protease activity; shared with dimeric partner in catalysis. 2 dimerization of protease regions span residues 560–566 (GIGGFIN) and 599–611 (NILT…LNLP). A Reverse transcriptase domain is found at 654 to 844 (EGQLEEAPPT…PPYQWMGYEL (191 aa)). Asp720, Asp795, and Asp796 together coordinate Mg(2+). Positions 837-845 (YQWMGYELW) are RT 'primer grip'. The Tryptophan repeat motif motif lies at 1007-1023 (WEQWWDNYWQVTWIPDW). Residues 1043-1166 (IPGAETFYTD…IDHLVSQGIR (124 aa)) enclose the RNase H type-1 domain. The Mg(2+) site is built by Asp1052, Glu1087, Asp1107, and Asp1158. The segment at 1172-1213 (ERIEPAQEEHGKYHSNVKELAHKFGLPNLVARQIVNTCAQCQ) adopts an Integrase-type zinc-finger fold. His1181, His1185, Cys1209, and Cys1212 together coordinate Zn(2+). One can recognise an Integrase catalytic domain in the interval 1222–1373 (QVNAELGTWQ…TPVERLVNMI (152 aa)). Positions 1233, 1285, and 1321 each coordinate Mg(2+). A DNA-binding region (integrase-type) is located at residues 1392–1439 (FRVYFREGRNQLWQGPGELLWKGDGAVIVKVGTDIKVIPRRKAKIIRD). Residues 1443-1462 (RQEMDSGSHLEGAREDGEMA) form a disordered region.

Homotrimer; further assembles as hexamers of trimers. Interacts with gp41 (via C-terminus). Interacts with host CALM1; this interaction induces a conformational change in the Matrix protein, triggering exposure of the myristate group. Interacts with host AP3D1; this interaction allows the polyprotein trafficking to multivesicular bodies during virus assembly. Part of the pre-integration complex (PIC) which is composed of viral genome, matrix protein, Vpr and integrase. As to quaternary structure, homodimer; the homodimer further multimerizes as homohexamers or homopentamers. Interacts with human PPIA/CYPA. Interacts with human NUP153. Interacts with host PDZD8; this interaction stabilizes the capsid. Interacts with monkey TRIM5; this interaction destabilizes the capsid. In terms of assembly, homodimer, whose active site consists of two apposed aspartic acid residues. Heterodimer of p66 RT and p51 RT (RT p66/p51). Heterodimerization of RT is essential for DNA polymerase activity. The overall folding of the subdomains is similar in p66 RT and p51 RT but the spatial arrangements of the subdomains are dramatically different. As to quaternary structure, homotetramer; may further associate as a homohexadecamer. Part of the pre-integration complex (PIC) which is composed of viral genome, matrix protein, Vpr and integrase. Interacts with human SMARCB1/INI1 and human PSIP1/LEDGF isoform 1. Interacts with human KPNA3; this interaction might play a role in nuclear import of the pre-integration complex. Interacts with human NUP153; this interaction might play a role in nuclear import of the pre-integration complex. The cofactor is Mg(2+). Specific enzymatic cleavages by the viral protease yield mature proteins. The protease is released by autocatalytic cleavage. The polyprotein is cleaved during and after budding, this process is termed maturation. Proteolytic cleavage of p66 RT removes the RNase H domain to yield the p51 RT subunit. Nucleocapsid protein p7 might be further cleaved after virus entry.

It localises to the host cell membrane. Its subcellular location is the host endosome. The protein resides in the host multivesicular body. It is found in the virion membrane. The protein localises to the host nucleus. It localises to the host cytoplasm. Its subcellular location is the virion. The enzyme catalyses Endopeptidase for which the P1 residue is preferably hydrophobic.. It catalyses the reaction Endohydrolysis of RNA in RNA/DNA hybrids. Three different cleavage modes: 1. sequence-specific internal cleavage of RNA. Human immunodeficiency virus type 1 and Moloney murine leukemia virus enzymes prefer to cleave the RNA strand one nucleotide away from the RNA-DNA junction. 2. RNA 5'-end directed cleavage 13-19 nucleotides from the RNA end. 3. DNA 3'-end directed cleavage 15-20 nucleotides away from the primer terminus.. It carries out the reaction 3'-end directed exonucleolytic cleavage of viral RNA-DNA hybrid.. The catalysed reaction is DNA(n) + a 2'-deoxyribonucleoside 5'-triphosphate = DNA(n+1) + diphosphate. With respect to regulation, protease: The viral protease is inhibited by many synthetic protease inhibitors (PIs), such as amprenavir, atazanavir, indinavir, loprinavir, nelfinavir, ritonavir and saquinavir. Use of protease inhibitors in tritherapy regimens permit more ambitious therapeutic strategies. Reverse transcriptase/ribonuclease H: RT can be inhibited either by nucleoside RT inhibitors (NRTIs) or by non nucleoside RT inhibitors (NNRTIs). NRTIs act as chain terminators, whereas NNRTIs inhibit DNA polymerization by binding a small hydrophobic pocket near the RT active site and inducing an allosteric change in this region. Classical NRTIs are abacavir, adefovir (PMEA), didanosine (ddI), lamivudine (3TC), stavudine (d4T), tenofovir (PMPA), zalcitabine (ddC), and zidovudine (AZT). Classical NNRTIs are atevirdine (BHAP U-87201E), delavirdine, efavirenz (DMP-266), emivirine (I-EBU), and nevirapine (BI-RG-587). The tritherapies used as a basic effective treatment of AIDS associate two NRTIs and one NNRTI. In terms of biological role, mediates, with Gag polyprotein, the essential events in virion assembly, including binding the plasma membrane, making the protein-protein interactions necessary to create spherical particles, recruiting the viral Env proteins, and packaging the genomic RNA via direct interactions with the RNA packaging sequence (Psi). Gag-Pol polyprotein may regulate its own translation, by the binding genomic RNA in the 5'-UTR. At low concentration, the polyprotein would promote translation, whereas at high concentration, the polyprotein would encapsidate genomic RNA and then shut off translation. Targets the polyprotein to the plasma membrane via a multipartite membrane-binding signal, that includes its myristoylated N-terminus. Matrix protein is part of the pre-integration complex. Implicated in the release from host cell mediated by Vpu. Binds to RNA. Its function is as follows. Forms the conical core that encapsulates the genomic RNA-nucleocapsid complex in the virion. Most core are conical, with only 7% tubular. The core is constituted by capsid protein hexamer subunits. The core is disassembled soon after virion entry. Host restriction factors such as TRIM5-alpha or TRIMCyp bind retroviral capsids and cause premature capsid disassembly, leading to blocks in reverse transcription. Capsid restriction by TRIM5 is one of the factors which restricts HIV-1 to the human species. Host PIN1 apparently facilitates the virion uncoating. On the other hand, interactions with PDZD8 or CYPA stabilize the capsid. Functionally, encapsulates and protects viral dimeric unspliced genomic RNA (gRNA). Binds these RNAs through its zinc fingers. Acts as a nucleic acid chaperone which is involved in rearangement of nucleic acid secondary structure during gRNA retrotranscription. Also facilitates template switch leading to recombination. As part of the polyprotein, participates in gRNA dimerization, packaging, tRNA incorporation and virion assembly. In terms of biological role, aspartyl protease that mediates proteolytic cleavages of Gag and Gag-Pol polyproteins during or shortly after the release of the virion from the plasma membrane. Cleavages take place as an ordered, step-wise cascade to yield mature proteins. This process is called maturation. Displays maximal activity during the budding process just prior to particle release from the cell. Also cleaves Nef and Vif, probably concomitantly with viral structural proteins on maturation of virus particles. Hydrolyzes host EIF4GI and PABP1 in order to shut off the capped cellular mRNA translation. The resulting inhibition of cellular protein synthesis serves to ensure maximal viral gene expression and to evade host immune response. Multifunctional enzyme that converts the viral RNA genome into dsDNA in the cytoplasm, shortly after virus entry into the cell. This enzyme displays a DNA polymerase activity that can copy either DNA or RNA templates, and a ribonuclease H (RNase H) activity that cleaves the RNA strand of RNA-DNA heteroduplexes in a partially processive 3' to 5' endonucleasic mode. Conversion of viral genomic RNA into dsDNA requires many steps. A tRNA(3)-Lys binds to the primer-binding site (PBS) situated at the 5'-end of the viral RNA. RT uses the 3' end of the tRNA primer to perform a short round of RNA-dependent minus-strand DNA synthesis. The reading proceeds through the U5 region and ends after the repeated (R) region which is present at both ends of viral RNA. The portion of the RNA-DNA heteroduplex is digested by the RNase H, resulting in a ssDNA product attached to the tRNA primer. This ssDNA/tRNA hybridizes with the identical R region situated at the 3' end of viral RNA. This template exchange, known as minus-strand DNA strong stop transfer, can be either intra- or intermolecular. RT uses the 3' end of this newly synthesized short ssDNA to perform the RNA-dependent minus-strand DNA synthesis of the whole template. RNase H digests the RNA template except for two polypurine tracts (PPTs) situated at the 5'-end and near the center of the genome. It is not clear if both polymerase and RNase H activities are simultaneous. RNase H probably can proceed both in a polymerase-dependent (RNA cut into small fragments by the same RT performing DNA synthesis) and a polymerase-independent mode (cleavage of remaining RNA fragments by free RTs). Secondly, RT performs DNA-directed plus-strand DNA synthesis using the PPTs that have not been removed by RNase H as primers. PPTs and tRNA primers are then removed by RNase H. The 3' and 5' ssDNA PBS regions hybridize to form a circular dsDNA intermediate. Strand displacement synthesis by RT to the PBS and PPT ends produces a blunt ended, linear dsDNA copy of the viral genome that includes long terminal repeats (LTRs) at both ends. Its function is as follows. Catalyzes viral DNA integration into the host chromosome, by performing a series of DNA cutting and joining reactions. This enzyme activity takes place after virion entry into a cell and reverse transcription of the RNA genome in dsDNA. The first step in the integration process is 3' processing. This step requires a complex comprising the viral genome, matrix protein, Vpr and integrase. This complex is called the pre-integration complex (PIC). The integrase protein removes 2 nucleotides from each 3' end of the viral DNA, leaving recessed CA OH's at the 3' ends. In the second step, the PIC enters cell nucleus. This process is mediated through integrase and Vpr proteins, and allows the virus to infect a non dividing cell. This ability to enter the nucleus is specific of lentiviruses, other retroviruses cannot and rely on cell division to access cell chromosomes. In the third step, termed strand transfer, the integrase protein joins the previously processed 3' ends to the 5' ends of strands of target cellular DNA at the site of integration. The 5'-ends are produced by integrase-catalyzed staggered cuts, 5 bp apart. A Y-shaped, gapped, recombination intermediate results, with the 5'-ends of the viral DNA strands and the 3' ends of target DNA strands remaining unjoined, flanking a gap of 5 bp. The last step is viral DNA integration into host chromosome. This involves host DNA repair synthesis in which the 5 bp gaps between the unjoined strands are filled in and then ligated. Since this process occurs at both cuts flanking the HIV genome, a 5 bp duplication of host DNA is produced at the ends of HIV-1 integration. Alternatively, Integrase may catalyze the excision of viral DNA just after strand transfer, this is termed disintegration. The polypeptide is Gag-Pol polyprotein (gag-pol) (Human immunodeficiency virus type 2 subtype A (isolate SBLISY) (HIV-2)).